The primary structure comprises 627 residues: Glycerophosphodiester phosphodiesterase domain-containing protein 4 (627 aa).

Residues 1 to 17 (MLLFLWIETSNEYFNFD) lie on the Cytoplasmic side of the membrane. Residues 18 to 38 (WVIFLGTGYWFYWSIFILSLA) form a helical membrane-spanning segment. Residue Gly39 is a topological domain, extracellular. A helical transmembrane segment spans residues 40–60 (ILTAYSSLLLLLGLLLLWEGI). Residues 61–69 (ELYLHLCHK) are Cytoplasmic-facing. The chain crosses the membrane as a helical span at residues 70–90 (ILILLVILPCVILMFIICKFW). The Extracellular segment spans residues 91 to 107 (KERWLVAGLSLQIFAPY). Residues 108–128 (VHLVSITVMVILFWPVAIYVA) form a helical membrane-spanning segment. The Cytoplasmic portion of the chain corresponds to 129-162 (RLEREVRMRRYRMTHSEKKRLKKCNVIARLRGLQ). Residues 163-183 (VAVGLPFLLIFLSLCLMPLGI) traverse the membrane as a helical segment. Topologically, residues 184-468 (YSPCIQEKEN…PHFFMTPKFY (285 aa)) are extracellular. The region spanning 198–457 (PTLFGHRGAP…DNIGLLSQLN (260 aa)) is the GP-PDE domain. The a divalent metal cation site is built by Glu230, Asp232, and His245. N-linked (GlcNAc...) asparagine glycans are attached at residues Asn308 and Asn397. Residues 469 to 489 (MFIWLLVDIISVLFIVAIFCF) form a helical membrane-spanning segment. At 490–627 (HWRRETIKEK…TMPSVEVPYP (138 aa)) the chain is on the cytoplasmic side.

Belongs to the glycerophosphoryl diester phosphodiesterase family.

The protein resides in the membrane. The chain is Glycerophosphodiester phosphodiesterase domain-containing protein 4 (GDPD4) from Macaca fascicularis (Crab-eating macaque).